A 495-amino-acid chain; its full sequence is Prenylcysteine oxidase 1-like (495 aa).

The first 22 residues, 1-22 (MARAAPLLAVLATVLTTAAAGG), serve as a signal peptide directing secretion. 2 N-linked (GlcNAc...) asparagine glycosylation sites follow: N185 and N343.

Belongs to the prenylcysteine oxidase family. It depends on FAD as a cofactor.

The protein resides in the secreted. Functionally, likely to have oxidoreductase activity. Required in the mevalonate pathway to regulate prenylation and enhances the bactericidal activity of neutrophils. This chain is Prenylcysteine oxidase 1-like (Pcyox1l), found in Mus musculus (Mouse).